The primary structure comprises 163 residues: 6,7-dimethyl-8-ribityllumazine synthase (163 aa).

Residues Phe27, 58 to 60 (ALE), and 87 to 89 (CVV) contribute to the 5-amino-6-(D-ribitylamino)uracil site. (2S)-2-hydroxy-3-oxobutyl phosphate is bound at residue 92 to 93 (DT). His95 serves as the catalytic Proton donor. Asn120 serves as a coordination point for 5-amino-6-(D-ribitylamino)uracil. Arg134 lines the (2S)-2-hydroxy-3-oxobutyl phosphate pocket.

The protein belongs to the DMRL synthase family.

It carries out the reaction (2S)-2-hydroxy-3-oxobutyl phosphate + 5-amino-6-(D-ribitylamino)uracil = 6,7-dimethyl-8-(1-D-ribityl)lumazine + phosphate + 2 H2O + H(+). It participates in cofactor biosynthesis; riboflavin biosynthesis; riboflavin from 2-hydroxy-3-oxobutyl phosphate and 5-amino-6-(D-ribitylamino)uracil: step 1/2. Its function is as follows. Catalyzes the formation of 6,7-dimethyl-8-ribityllumazine by condensation of 5-amino-6-(D-ribitylamino)uracil with 3,4-dihydroxy-2-butanone 4-phosphate. This is the penultimate step in the biosynthesis of riboflavin. This Nitrobacter hamburgensis (strain DSM 10229 / NCIMB 13809 / X14) protein is 6,7-dimethyl-8-ribityllumazine synthase.